Consider the following 838-residue polypeptide: Periplasmic nitrate reductase (838 aa).

The tat-type signal signal peptide spans 1 to 29 (MDMSRRTLLKAQAAAAAAAVAGIDLPAEA). A 4Fe-4S Mo/W bis-MGD-type domain is found at 40 to 96 (LKWSKAPCRFCGTGCGVMVGVKDGRVVATHGDMQAEVNRGLNCVKGYFLSKIMYGAD). Cys-47, Cys-50, Cys-54, and Cys-82 together coordinate [4Fe-4S] cluster. Residues Lys-84, Gln-151, Asn-176, Cys-180, 213 to 220 (WGSNMAEM), 244 to 248 (STYEH), 263 to 265 (GTD), Met-374, Gln-378, Asn-484, 510 to 511 (SD), Lys-533, Asp-560, and 720 to 729 (TGRVLEHWHS) contribute to the Mo-bis(molybdopterin guanine dinucleotide) site. Phe-796 provides a ligand contact to substrate. Mo-bis(molybdopterin guanine dinucleotide) contacts are provided by Asn-804 and Lys-821.

Belongs to the prokaryotic molybdopterin-containing oxidoreductase family. NasA/NapA/NarB subfamily. In terms of assembly, component of the periplasmic nitrate reductase NapAB complex composed of NapA and NapB. [4Fe-4S] cluster serves as cofactor. Requires Mo-bis(molybdopterin guanine dinucleotide) as cofactor. Predicted to be exported by the Tat system. The position of the signal peptide cleavage has not been experimentally proven.

The protein localises to the periplasm. The catalysed reaction is 2 Fe(II)-[cytochrome] + nitrate + 2 H(+) = 2 Fe(III)-[cytochrome] + nitrite + H2O. Catalytic subunit of the periplasmic nitrate reductase complex NapAB. Receives electrons from NapB and catalyzes the reduction of nitrate to nitrite. The sequence is that of Periplasmic nitrate reductase from Methylobacterium sp. (strain 4-46).